A 66-amino-acid chain; its full sequence is UPF0337 protein BT9727_0908 (66 aa).

The segment at 1 to 22 is disordered; it reads MSENGLKEQITGKVEKTKGQVK. Positions 13–22 are enriched in basic and acidic residues; sequence KVEKTKGQVK.

It belongs to the UPF0337 (CsbD) family.

In Bacillus thuringiensis subsp. konkukian (strain 97-27), this protein is UPF0337 protein BT9727_0908.